Reading from the N-terminus, the 805-residue chain is Leucine--tRNA ligase (805 aa).

Residues 40–51 (PYPSGQGLHVGH) carry the 'HIGH' region motif. Residues 576–580 (KMSKS) carry the 'KMSKS' region motif. K579 lines the ATP pocket.

It belongs to the class-I aminoacyl-tRNA synthetase family.

It is found in the cytoplasm. The enzyme catalyses tRNA(Leu) + L-leucine + ATP = L-leucyl-tRNA(Leu) + AMP + diphosphate. In Ligilactobacillus salivarius (strain UCC118) (Lactobacillus salivarius), this protein is Leucine--tRNA ligase.